The sequence spans 125 residues: MEKDEEDEESEEAEEELLVLESDEKLNDVNDMEAMLVDELVCDTRDLLDVDEVREDESALEEETILDDKMELEELTLLTEERAVDTAEEFEDDDCTKNCARIVDMHDSIKSNKRKLFLVVKDNIL.

This is an uncharacterized protein from Saccharomyces cerevisiae (strain ATCC 204508 / S288c) (Baker's yeast).